The chain runs to 461 residues: Bifunctional enzyme LpxC/FabZ (461 aa).

Positions 1-302 are UDP-3-O-acyl-N-acetylglucosamine deacetylase; that stretch reads MLKQKTLKDS…FARQMRKEIR (302 aa). 3 residues coordinate Zn(2+): histidine 78, histidine 260, and aspartate 264. Histidine 287 (proton donor) is an active-site residue. The segment at 303 to 461 is 3-hydroxyacyl-[acyl-carrier-protein] dehydratase; sequence LHEIQAPTYD…EFMAQIVKNK (159 aa). Histidine 364 is a catalytic residue.

This sequence in the N-terminal section; belongs to the LpxC family. It in the C-terminal section; belongs to the thioester dehydratase family. Zn(2+) serves as cofactor.

It localises to the cytoplasm. It carries out the reaction a UDP-3-O-[(3R)-3-hydroxyacyl]-N-acetyl-alpha-D-glucosamine + H2O = a UDP-3-O-[(3R)-3-hydroxyacyl]-alpha-D-glucosamine + acetate. The enzyme catalyses a (3R)-hydroxyacyl-[ACP] = a (2E)-enoyl-[ACP] + H2O. Its pathway is glycolipid biosynthesis; lipid IV(A) biosynthesis; lipid IV(A) from (3R)-3-hydroxytetradecanoyl-[acyl-carrier-protein] and UDP-N-acetyl-alpha-D-glucosamine: step 2/6. Its function is as follows. Catalyzes the hydrolysis of UDP-3-O-myristoyl-N-acetylglucosamine to form UDP-3-O-myristoylglucosamine and acetate, the committed step in lipid A biosynthesis. Involved in unsaturated fatty acids biosynthesis. Catalyzes the dehydration of short chain beta-hydroxyacyl-ACPs and long chain saturated and unsaturated beta-hydroxyacyl-ACPs. The sequence is that of Bifunctional enzyme LpxC/FabZ (lpxC/fabZ) from Bacteroides thetaiotaomicron (strain ATCC 29148 / DSM 2079 / JCM 5827 / CCUG 10774 / NCTC 10582 / VPI-5482 / E50).